We begin with the raw amino-acid sequence, 438 residues long: MLRESDGEMSLGTTNSPISSGTESCSSFSRLSFDAPPSTIPEEESFLSLKPHRSSDFAYAEIRRRKKQGLTFRDFRLMRRIGAGDIGTVYLCRLAGDEEESRSSYFAMKVVDKEALALKKKMHRAEMEKTILKMLDHPFLPTLYAEFEASHFSCIVMEYCSGGDLHSLRHRQPHRRFSLSSARFYAAEVLVALEYLHMLGIIYRDLKPENILVRSDGHIMLSDFDLSLCSDSIAAVESSSSSPENQQLRSPRRFTRLARLFQRVLRSKKVQTLEPTRLFVAEPVTARSGSFVGTHEYVAPEVASGGSHGNAVDWWAFGVFLYEMIYGKTPFVAPTNDVILRNIVKRQLSFPTDSPATMFELHARNLISGLLNKDPTKRLGSRRGAAEVKVHPFFKGLNFALIRTLTPPEIPSSVVKKPMKSATFSGRSSNKPAAFDYF.

A disordered region spans residues 1–24 (MLRESDGEMSLGTTNSPISSGTES). The segment covering 11–24 (LGTTNSPISSGTES) has biased composition (polar residues). A Protein kinase domain is found at 75–394 (FRLMRRIGAG…AAEVKVHPFF (320 aa)). ATP is bound by residues 81–89 (IGAGDIGTV) and Lys-109. The Proton acceptor role is filled by Asp-205. An AGC-kinase C-terminal domain is found at 395-438 (KGLNFALIRTLTPPEIPSSVVKKPMKSATFSGRSSNKPAAFDYF).

The protein belongs to the protein kinase superfamily. Ser/Thr protein kinase family. As to quaternary structure, interacts with PDK1, CML12 and PBP1. Component of a complex made of PINs (e.g. PIN1 and PIN2), MAB4/MELs (e.g. NPY1/MAB4 and NPY5/MEL1) and AGC kinases (e.g. D6PK and PID) at the plasma membrane. Binds directly to PIN2, NPY1/MAB4 and NPY5/MEL1. Autophosphorylated. Phosphorylated by PDK1. In terms of tissue distribution, expressed in root hair cells, shoot xylem parenchyma cells and endodermis around the vasculature. Expressed in anther primordia, vasculature of the growing flower stalk, young pedicels and bracts and developing sepals, but not in petals. In pistils, transiently expressed in the vasculature of the style and the septum, and in the integuments and funiculus of the developing ovule.

Its subcellular location is the cytoplasm. It localises to the cytosol. It is found in the cell membrane. The catalysed reaction is L-seryl-[protein] + ATP = O-phospho-L-seryl-[protein] + ADP + H(+). The enzyme catalyses L-threonyl-[protein] + ATP = O-phospho-L-threonyl-[protein] + ADP + H(+). Its activity is regulated as follows. Activated by magnesium and PDK1. Inhibited by staurosporine. Repressed by calcium. Functionally, serine/threonine-protein kinase involved in the regulation of auxin signaling. Acts as a positive regulator of cellular auxin efflux and regulates organ development by enhancing polar auxin transport. Phosphorylates conserved serine residues in the PIN auxin efflux carriers. Phosphorylation of PIN proteins is required and sufficient for apical-basal PIN polarity that enables directional intercellular auxin fluxes, which mediate differential growth, tissue patterning and organogenesis. Phosphorylates PIN proteins (e.g. PIN1 and PIN2), especially when NPY proteins (e.g. NPY1/MAB4 and NPY5/MEL1) are recruited at the plasma membrane; this enhances the polarized localizations (apical or basal) of PINs in the cell by limiting their lateral diffusion-based escape. Acts in association with PIN1 to control the establishment of bilateral symmetry and promotion of cotyledon outgrowth. Regulates root gravitropism through modulation of PIN2-dependent basipetal auxin transport. Required for polarization of PIN3-dependent auxin transport for hypocotyl gravitropic response. The protein kinase activity of PID is essential for its auxin efflux regulatory function. PID kinase and PP2A phosphatase activities antagonistically regulate phosphorylation of PIN proteins, affecting PIN sorting. This chain is Protein kinase PINOID, found in Arabidopsis thaliana (Mouse-ear cress).